A 197-amino-acid polypeptide reads, in one-letter code: FMN-dependent NADH:quinone oxidoreductase (197 aa).

Residues serine 10 and 16-18 each bind FMN; that span reads SIS.

It belongs to the azoreductase type 1 family. In terms of assembly, homodimer. FMN is required as a cofactor.

The catalysed reaction is 2 a quinone + NADH + H(+) = 2 a 1,4-benzosemiquinone + NAD(+). It catalyses the reaction N,N-dimethyl-1,4-phenylenediamine + anthranilate + 2 NAD(+) = 2-(4-dimethylaminophenyl)diazenylbenzoate + 2 NADH + 2 H(+). In terms of biological role, quinone reductase that provides resistance to thiol-specific stress caused by electrophilic quinones. Also exhibits azoreductase activity. Catalyzes the reductive cleavage of the azo bond in aromatic azo compounds to the corresponding amines. In Erythrobacter litoralis (strain HTCC2594), this protein is FMN-dependent NADH:quinone oxidoreductase.